Consider the following 470-residue polypeptide: Chromosomal replication initiator protein DnaA (470 aa).

Residues 1 to 89 (MIESNHVVLW…YNVMVDKTSI (89 aa)) are domain I, interacts with DnaA modulators. A domain II region spans residues 89-130 (IPNQTVNLEASNRSTAVTPKSIVGGNKAPSFLKAPAVQDLDP). A domain III, AAA+ region region spans residues 131-348 (HLNPNYNFEN…GIVIAIMARS (218 aa)). ATP-binding residues include G176, G178, K179, and T180. The domain IV, binds dsDNA stretch occupies residues 349-470 (TIFNKEIDLD…EIESLLKKKA (122 aa)).

The protein belongs to the DnaA family. As to quaternary structure, oligomerizes as a right-handed, spiral filament on DNA at oriC.

It localises to the cytoplasm. Its function is as follows. Plays an essential role in the initiation and regulation of chromosomal replication. ATP-DnaA binds to the origin of replication (oriC) to initiate formation of the DNA replication initiation complex once per cell cycle. Binds the DnaA box (a 9 base pair repeat at the origin) and separates the double-stranded (ds)DNA. Forms a right-handed helical filament on oriC DNA; dsDNA binds to the exterior of the filament while single-stranded (ss)DNA is stabiized in the filament's interior. The ATP-DnaA-oriC complex binds and stabilizes one strand of the AT-rich DNA unwinding element (DUE), permitting loading of DNA polymerase. After initiation quickly degrades to an ADP-DnaA complex that is not apt for DNA replication. Binds acidic phospholipids. The chain is Chromosomal replication initiator protein DnaA from Bacteroides thetaiotaomicron (strain ATCC 29148 / DSM 2079 / JCM 5827 / CCUG 10774 / NCTC 10582 / VPI-5482 / E50).